We begin with the raw amino-acid sequence, 352 residues long: Histidine biosynthesis bifunctional protein HisB (352 aa).

The segment at Met1 to Phe164 is histidinol-phosphatase. The active-site Nucleophile is the Asp9. Residues Asp9 and Asp11 each coordinate Mg(2+). Catalysis depends on Asp11, which acts as the Proton donor. Residues Cys93, His95, Cys101, and Cys103 each coordinate Zn(2+). Asp130 is a Mg(2+) binding site. Positions Arg165–Ile352 are imidazoleglycerol-phosphate dehydratase.

This sequence in the N-terminal section; belongs to the histidinol-phosphatase family. It in the C-terminal section; belongs to the imidazoleglycerol-phosphate dehydratase family. It depends on Mg(2+) as a cofactor. Zn(2+) serves as cofactor.

Its subcellular location is the cytoplasm. The catalysed reaction is D-erythro-1-(imidazol-4-yl)glycerol 3-phosphate = 3-(imidazol-4-yl)-2-oxopropyl phosphate + H2O. It catalyses the reaction L-histidinol phosphate + H2O = L-histidinol + phosphate. It functions in the pathway amino-acid biosynthesis; L-histidine biosynthesis; L-histidine from 5-phospho-alpha-D-ribose 1-diphosphate: step 6/9. It participates in amino-acid biosynthesis; L-histidine biosynthesis; L-histidine from 5-phospho-alpha-D-ribose 1-diphosphate: step 8/9. This chain is Histidine biosynthesis bifunctional protein HisB, found in Campylobacter jejuni subsp. jejuni serotype O:23/36 (strain 81-176).